Reading from the N-terminus, the 458-residue chain is Adenylosuccinate synthetase (458 aa).

GTP is bound by residues 17–23 (GDEGKGK) and 45–47 (GHT). Asp18 serves as the catalytic Proton acceptor. Mg(2+) contacts are provided by Asp18 and Gly45. Residues 18 to 21 (DEGK), 43 to 46 (NAGH), Thr137, Arg151, Gln247, Thr262, and Arg330 each bind IMP. His46 serves as the catalytic Proton donor. Residue 326–332 (VTTGRSR) participates in substrate binding. Residues Arg332, 358-360 (KLD), and 440-442 (STS) contribute to the GTP site.

It belongs to the adenylosuccinate synthetase family. Homodimer. Mg(2+) serves as cofactor.

Its subcellular location is the cytoplasm. It carries out the reaction IMP + L-aspartate + GTP = N(6)-(1,2-dicarboxyethyl)-AMP + GDP + phosphate + 2 H(+). The protein operates within purine metabolism; AMP biosynthesis via de novo pathway; AMP from IMP: step 1/2. Its function is as follows. Plays an important role in the de novo pathway of purine nucleotide biosynthesis. Catalyzes the first committed step in the biosynthesis of AMP from IMP. In Delftia acidovorans (strain DSM 14801 / SPH-1), this protein is Adenylosuccinate synthetase.